We begin with the raw amino-acid sequence, 54 residues long: Large ribosomal subunit protein bL33B (54 aa).

The protein belongs to the bacterial ribosomal protein bL33 family.

The sequence is that of Large ribosomal subunit protein bL33B from Mycobacterium sp. (strain KMS).